The chain runs to 241 residues: Ubiquinone biosynthesis O-methyltransferase (241 aa).

S-adenosyl-L-methionine contacts are provided by R44, G64, D85, and M129.

This sequence belongs to the methyltransferase superfamily. UbiG/COQ3 family.

The enzyme catalyses a 3-demethylubiquinol + S-adenosyl-L-methionine = a ubiquinol + S-adenosyl-L-homocysteine + H(+). The catalysed reaction is a 3-(all-trans-polyprenyl)benzene-1,2-diol + S-adenosyl-L-methionine = a 2-methoxy-6-(all-trans-polyprenyl)phenol + S-adenosyl-L-homocysteine + H(+). Its pathway is cofactor biosynthesis; ubiquinone biosynthesis. Functionally, O-methyltransferase that catalyzes the 2 O-methylation steps in the ubiquinone biosynthetic pathway. The polypeptide is Ubiquinone biosynthesis O-methyltransferase (Serratia proteamaculans (strain 568)).